The following is a 157-amino-acid chain: MAQEKVFPMTHEGKQKLEQELEQLKTVKRKEVVERIKIARSFGDLSENSEYDSAKEEQAFVEGRITTLENMIRNAKIIEDDGGSNVVGLGKTVSFIELPDGEEESYTIVGSAEADPFEGKISNDSPIAKSLLGRKVDEEVTVQTPGGEMLVKIVKIS.

Residues 10-76 are a coiled coil; the sequence is THEGKQKLEQ…TLENMIRNAK (67 aa).

This sequence belongs to the GreA/GreB family.

Functionally, necessary for efficient RNA polymerase transcription elongation past template-encoded arresting sites. The arresting sites in DNA have the property of trapping a certain fraction of elongating RNA polymerases that pass through, resulting in locked ternary complexes. Cleavage of the nascent transcript by cleavage factors such as GreA or GreB allows the resumption of elongation from the new 3'terminus. GreA releases sequences of 2 to 3 nucleotides. This chain is Transcription elongation factor GreA, found in Bacillus velezensis (strain DSM 23117 / BGSC 10A6 / LMG 26770 / FZB42) (Bacillus amyloliquefaciens subsp. plantarum).